The sequence spans 208 residues: NAD(P)H-hydrate epimerase (208 aa).

Residues 10 to 208 (IRDAERQTLA…TLGVIMTPAN (199 aa)) enclose the YjeF N-terminal domain. 54 to 58 (NNGGD) lines the (6S)-NADPHX pocket. 2 residues coordinate K(+): Asn-55 and Asp-117. Residues 121-127 (GIGLNRP) and Asp-150 contribute to the (6S)-NADPHX site. Residue Ser-153 participates in K(+) binding.

This sequence belongs to the NnrE/AIBP family. K(+) is required as a cofactor.

It catalyses the reaction (6R)-NADHX = (6S)-NADHX. It carries out the reaction (6R)-NADPHX = (6S)-NADPHX. Functionally, catalyzes the epimerization of the S- and R-forms of NAD(P)HX, a damaged form of NAD(P)H that is a result of enzymatic or heat-dependent hydration. This is a prerequisite for the S-specific NAD(P)H-hydrate dehydratase to allow the repair of both epimers of NAD(P)HX. The polypeptide is NAD(P)H-hydrate epimerase (Achromobacter xylosoxidans (strain A8)).